The primary structure comprises 144 residues: Complexin-1 (144 aa).

Positions 1–10 (MVSFLGGGLL) are enriched in gly residues. The disordered stretch occupies residues 1–119 (MVSFLGGGLL…SGFPKNLDDL (119 aa)). 2 stretches are compositionally biased toward basic and acidic residues: residues 18–27 (LEEKEDKKEG) and 36–86 (AEAK…EGRL). A coiled-coil region spans residues 29–67 (EEEDPEIAEAKREAEEKRNEKYRKMEEEREVMRQGIRDK). Positions 103–112 (LQSSAQSSGF) are enriched in polar residues. A Cysteine methyl ester modification is found at Cys141. A lipid anchor (S-farnesyl cysteine) is attached at Cys141. The propeptide at 142 to 144 (NLQ) is removed in mature form.

Belongs to the complexin/synaphin family. Binds to the SNARE core complex containing SNAP25, synaptobrevin and syntaxin-1. As to expression, expressed in a subset of neurons in the central nervous system, including large serotoninergic Retzius neurons and pressure-sensitive P cells.

The protein localises to the membrane. Positively regulates a late step in synaptic vesicle exocytosis. This chain is Complexin-1 (cpx1), found in Hirudo medicinalis (Medicinal leech).